The chain runs to 57 residues: Preprotein translocase subunit SecG (57 aa).

Over 1 to 31 (MAKKKGEGPGLMSSAGLMRYFESEETSIKLD) the chain is Cytoplasmic. A helical membrane pass occupies residues 32–53 (PKMVIGAGIASGVAIMALNITF). Topologically, residues 54–57 (GLWP) are extracellular.

Belongs to the SEC61-beta family. As to quaternary structure, component of the protein translocase complex. Heterotrimer consisting of alpha (SecY), beta (SecG) and gamma (SecE) subunits. Can form oligomers of the heterotrimer.

Its subcellular location is the cell membrane. Involved in protein export. The function of the beta subunit is unknown, but it may be involved in stabilization of the trimeric complex. The sequence is that of Preprotein translocase subunit SecG from Methanothrix thermoacetophila (strain DSM 6194 / JCM 14653 / NBRC 101360 / PT) (Methanosaeta thermophila).